Consider the following 37-residue polypeptide: Conotoxin Bt1.8 (37 aa).

The propeptide occupies 1-20 (PDGRNAAAKAFDLITPTVRK). 2 cysteine pairs are disulfide-bonded: cysteine 22–cysteine 28 and cysteine 23–cysteine 36. Cysteine 36 carries the post-translational modification Cysteine amide.

The protein belongs to the conotoxin A superfamily. In terms of tissue distribution, expressed by the venom duct.

The protein localises to the secreted. Alpha-conotoxins bind to the nicotinic acetylcholine receptors (nAChR) and inhibit them. This toxin inhibits mammalian alpha-3-beta-2/CHRNA3-CHRNB2 nAChR (IC(50)=9.4 nM (rat), IC(50)=8.8 nM (human)), as well as the subunit chimera alpha-6/alpha-3-beta-2-beta-3 nAChR (CHRNA6/CHRNA3-CHRNB2-CHRNB3)(IC(50)=2.1 nM (rat), IC(50)=1.7 nM (human)). Binds to rat alpha-6/alpha-3-beta-2-beta-3 more rapidly than to alpha-3-beta-2, and dissociates more rapidly from alpha-3-beta-2 than from alpha-6/alpha-3-beta-2-beta-3. This is Conotoxin Bt1.8 from Conus betulinus (Beech cone).